The chain runs to 1160 residues: Large proline-rich protein BAG6 (1160 aa).

The Ubiquitin-like domain occupies 7–82; sequence IEVTVKTLDS…HLVERPPPQS (76 aa). Disordered stretches follow at residues 76–114, 206–261, 367–422, 478–547, 563–628, 672–711, 962–1038, and 1126–1160; these read ERPP…YTTS, EGQS…HPSP, IPMN…GQGT, ASAG…QTNQ, GDQT…DNLA, SGQP…AETL, SARR…AEPW, and YAQQ…SEDA. A compositionally biased stretch (gly residues) spans 85–94; it reads PGGGGGGVSG. 2 stretches are compositionally biased toward low complexity: residues 95–110 and 223–233; these read SSGA…QSSA and SSSSFSAHPMD. Polar residues-rich tracts occupy residues 247 to 257 and 371 to 417; these read QTEGETQSGPN and LGST…QQTG. Composition is skewed to low complexity over residues 478 to 495 and 566 to 614; these read ASAG…AGAQ and TSTT…STAS. A compositionally biased stretch (pro residues) spans 677 to 698; it reads FPSPNQQPPPSQATPPSAPSGP. Positions 699–708 are enriched in low complexity; it reads APTTAPSGGA. Residues 1132–1146 are compositionally biased toward basic and acidic residues; the sequence is SDIKKRLSDDPDYNH.

As to quaternary structure, component of the bag6/bat3 complex.

The protein resides in the cytoplasm. It is found in the cytosol. It localises to the nucleus. The protein localises to the secreted. Its subcellular location is the extracellular exosome. Functionally, ATP-independent molecular chaperone preventing the aggregation of misfolded and hydrophobic patches-containing proteins. Functions as part of a cytosolic protein quality control complex, the bag6/bat3 complex, which maintains these client proteins in a soluble state and participates in their proper delivery to the endoplasmic reticulum or alternatively can promote their sorting to the proteasome where they undergo degradation. The bag6/bat3 complex is involved in the post-translational delivery of tail-anchored/type II transmembrane proteins to the endoplasmic reticulum membrane. Similarly, the bag6/bat3 complex also functions as a sorting platform for proteins of the secretory pathway that are mislocalized to the cytosol either delivering them to the proteasome for degradation or to the endoplasmic reticulum. The bag6/bat3 complex also plays a role in the endoplasmic reticulum-associated degradation (ERAD), a quality control mechanism that eliminates unwanted proteins of the endoplasmic reticulum through their retrotranslocation to the cytosol and their targeting to the proteasome. It maintains these retrotranslocated proteins in an unfolded yet soluble state condition in the cytosol to ensure their proper delivery to the proteasome. Also required for selective ubiquitin-mediated degradation of defective nascent chain polypeptides by the proteasome. Also involved in endoplasmic reticulum stress-induced pre-emptive quality control, a mechanism that selectively attenuates the translocation of newly synthesized proteins into the endoplasmic reticulum and reroutes them to the cytosol for proteasomal degradation. May ensure the proper degradation of these proteins and thereby protects the endoplasmic reticulum from protein overload upon stress. By stabilizing a large spectrum of proteins, may indirectly affect different biological processes including apoptosis. By controlling the steady-state expression of the IGF1R receptor, indirectly regulates the insulin-like growth factor receptor signaling pathway. In terms of biological role, when nuclear, may also act as a component of some chromatin regulator complex. This chain is Large proline-rich protein BAG6, found in Danio rerio (Zebrafish).